Reading from the N-terminus, the 284-residue chain is Tropomyosin (284 aa).

The disordered stretch occupies residues 1–47; it reads MDAIKKKMQAMKIEKDNAMDRADAAEEKARQQQERVEKLEEELRDTQ. Residues 1 to 284 adopt a coiled-coil conformation; it reads MDAIKKKMQA…DQTFQELSGY (284 aa). A compositionally biased stretch (basic and acidic residues) spans 12-38; it reads KIEKDNAMDRADAAEEKARQQQERVEK.

The protein belongs to the tropomyosin family. Homodimer.

Functionally, tropomyosin, in association with the troponin complex, plays a central role in the calcium dependent regulation of muscle contraction. The polypeptide is Tropomyosin (Trichinella pseudospiralis (Parasitic roundworm)).